A 407-amino-acid chain; its full sequence is MKRAFIMVLDSFGIGATEDADRFGDVGSDTLGHIAEACAKGEADNGRKGPLNLPNLTRLGLVKAHEGSTGKIAAGMDGNADVIGAYAWAHELSSGKDTPSGHWEIAGVPVLFDWGYFSDHENSFPQELLDKLVKRANLPGYLGNCHSSGTVILDQLGEEHMKTGKPIFYTSADSVFQIACHEETFGLDKLYELCEIAREELTEGGYNIGRVIARPFIGDKAGNFQRTGNRHDLAVEPPAPTVLQKLVDEKQGHVVSVGKIADIYANCGITKKVKATGLDALFDATLKEMKEAGDKTIVFTNFVDFDSSWGHRRDIAGYAAGLELFDRRLPELMELVGEDDILILTADHGCDPSWTGTDHTREHIPVLIYGPKVKPGSLGHRETFADIGQTLATYFGTSPMDYGKNML.

Residues aspartate 10, aspartate 306, histidine 311, aspartate 347, histidine 348, and histidine 359 each contribute to the Mn(2+) site.

This sequence belongs to the phosphopentomutase family. It depends on Mn(2+) as a cofactor.

It localises to the cytoplasm. It catalyses the reaction 2-deoxy-alpha-D-ribose 1-phosphate = 2-deoxy-D-ribose 5-phosphate. It carries out the reaction alpha-D-ribose 1-phosphate = D-ribose 5-phosphate. It participates in carbohydrate degradation; 2-deoxy-D-ribose 1-phosphate degradation; D-glyceraldehyde 3-phosphate and acetaldehyde from 2-deoxy-alpha-D-ribose 1-phosphate: step 1/2. Functionally, isomerase that catalyzes the conversion of deoxy-ribose 1-phosphate (dRib-1-P) and ribose 1-phosphate (Rib-1-P) to deoxy-ribose 5-phosphate (dRib-5-P) and ribose 5-phosphate (Rib-5-P), respectively. In Salmonella schwarzengrund (strain CVM19633), this protein is Phosphopentomutase.